A 202-amino-acid chain; its full sequence is Complement component C8 gamma chain (202 aa).

A signal peptide spans 1 to 20 (MLPPGTATLLTLLLAAGSLG). Gln-21 bears the Pyrrolidone carboxylic acid mark. A disulfide bridge connects residues Cys-96 and Cys-188.

It belongs to the calycin superfamily. Lipocalin family. In terms of assembly, heterotrimer of 3 chains: alpha (C8A), beta (C8B) and gamma (C8G); the alpha and gamma chains are disulfide bonded. Component of the membrane attack complex (MAC), composed of complement C5b, C6, C7, C8A, C8B, C8G and multiple copies of the pore-forming subunit C9.

It is found in the secreted. It localises to the target cell membrane. Its activity is regulated as follows. Membrane attack complex (MAC) assembly is inhibited by CD59, thereby protecting self-cells from damage during complement activation. MAC assembly is also inhibited by clusterin (CLU) chaperones that inhibit polymerization of C9. Component of the membrane attack complex (MAC), a multiprotein complex activated by the complement cascade, which inserts into a target cell membrane and forms a pore, leading to target cell membrane rupture and cell lysis. The MAC is initiated by proteolytic cleavage of C5 into complement C5b in response to the classical, alternative, lectin and GZMK complement pathways. The complement pathways consist in a cascade of proteins that leads to phagocytosis and breakdown of pathogens and signaling that strengthens the adaptive immune system. C8G, together with C8A and C8B, inserts into the target membrane, but does not form pores by itself. During MAC assembly, associates with C5b, C6 and C7 to form the C5b8 intermediate complex that inserts into the target membrane and traverses the bilayer increasing membrane rigidity. The sequence is that of Complement component C8 gamma chain from Homo sapiens (Human).